The chain runs to 228 residues: MAQPAHVPKFGNWDGENISYTTYFETVHRDKGDGSKIFNPNDPEENPQAFYPRTVAQDHQHSEKHHNDTSTDYHVVKQHRRKHHRREDREFHRYVEAPRPHRSPFQGVDMDSHRSRNHGTSATMSSSVKRNSDNWLPQHQHHRRTNKDLAEGKSWLFTTTTASSYTKSRKLSRECSSTTQSSISAKNLVPGDETRSPISWRVFQSYLTKLKEQKQIAATKIGQHLNLR.

Basic and acidic residues predominate over residues 56-75; the sequence is AQDHQHSEKHHNDTSTDYHV. Disordered stretches follow at residues 56–87 and 99–133; these read AQDHQHSEKHHNDTSTDYHVVKQHRRKHHRRE and RPHRSPFQGVDMDSHRSRNHGTSATMSSSVKRNSD. Positions 76–86 are enriched in basic residues; that stretch reads VKQHRRKHHRR. Over residues 118 to 133 the composition is skewed to polar residues; that stretch reads HGTSATMSSSVKRNSD.

Belongs to the RIN4 family.

The protein is NOI-like protein of Elaeis oleifera (American oil palm).